Here is a 670-residue protein sequence, read N- to C-terminus: NADH-ubiquinone oxidoreductase chain 5 (670 aa).

The next 19 membrane-spanning stretches (helical) occupy residues 1-21, 31-51, 81-101, 111-131, 133-153, 178-198, 211-231, 251-271, 283-303, 311-331, 339-359, 375-395, 421-441, 462-482, 519-539, 566-586, 594-614, 629-649, and 650-670; these read MYIV…IFGH, IAVG…YEIL, LTSI…LYSM, TRFF…VTAD, FVQL…LINF, LFFG…SVIF, LLGY…IGVV, TPVS…FLVL, ILNI…TIGI, VIAY…GLLN, LTTH…VIHG, LMPL…GFPF, AIIG…LLIL, TNMV…GYVT, LLPL…YFNI, FDFL…YDVM, LWEK…FTAL, IVQT…TGFI, and YMEL…IKID.

Belongs to the complex I subunit 5 family.

It localises to the mitochondrion inner membrane. It catalyses the reaction a ubiquinone + NADH + 5 H(+)(in) = a ubiquinol + NAD(+) + 4 H(+)(out). Its function is as follows. Core subunit of the mitochondrial membrane respiratory chain NADH dehydrogenase (Complex I) that is believed to belong to the minimal assembly required for catalysis. Complex I functions in the transfer of electrons from NADH to the respiratory chain. The immediate electron acceptor for the enzyme is believed to be ubiquinone. In Dictyostelium discoideum (Social amoeba), this protein is NADH-ubiquinone oxidoreductase chain 5 (nad5).